Here is a 609-residue protein sequence, read N- to C-terminus: UvrABC system protein C (609 aa).

The GIY-YIG domain occupies 16–94 (SSAGVYRMYD…IKQYMPKYNV (79 aa)). One can recognise a UVR domain in the interval 203-238 (KQVISELVAKMEEAAEQQAYEQAARFRDQIMALRRV).

Belongs to the UvrC family. Interacts with UvrB in an incision complex.

Its subcellular location is the cytoplasm. In terms of biological role, the UvrABC repair system catalyzes the recognition and processing of DNA lesions. UvrC both incises the 5' and 3' sides of the lesion. The N-terminal half is responsible for the 3' incision and the C-terminal half is responsible for the 5' incision. In Shewanella sp. (strain MR-4), this protein is UvrABC system protein C.